Consider the following 334-residue polypeptide: Glycerol-3-phosphate dehydrogenase [NAD(P)+] (334 aa).

NADPH is bound by residues serine 14, tyrosine 15, histidine 35, and lysine 109. Positions 109, 138, and 140 each coordinate sn-glycerol 3-phosphate. Alanine 142 serves as a coordination point for NADPH. Sn-glycerol 3-phosphate contacts are provided by lysine 194, aspartate 247, serine 257, arginine 258, and asparagine 259. Lysine 194 acts as the Proton acceptor in catalysis. An NADPH-binding site is contributed by arginine 258. NADPH contacts are provided by valine 282 and glutamate 284.

Belongs to the NAD-dependent glycerol-3-phosphate dehydrogenase family.

The protein localises to the cytoplasm. It carries out the reaction sn-glycerol 3-phosphate + NAD(+) = dihydroxyacetone phosphate + NADH + H(+). It catalyses the reaction sn-glycerol 3-phosphate + NADP(+) = dihydroxyacetone phosphate + NADPH + H(+). It functions in the pathway membrane lipid metabolism; glycerophospholipid metabolism. In terms of biological role, catalyzes the reduction of the glycolytic intermediate dihydroxyacetone phosphate (DHAP) to sn-glycerol 3-phosphate (G3P), the key precursor for phospholipid synthesis. The polypeptide is Glycerol-3-phosphate dehydrogenase [NAD(P)+] (Aeromonas salmonicida (strain A449)).